Here is a 60-residue protein sequence, read N- to C-terminus: Arabinogalactan protein 14 (60 aa).

The signal sequence occupies residues 1 to 28 (MEAMKMKLYVVVLVAVIAFSTVHQTVAA). 3 positions are modified to 4-hydroxyproline: P32, P34, and P36. P32, P34, and P36 each carry an O-linked (Ara...) hydroxyproline glycan. S38 carries the GPI-anchor amidated serine lipid modification. Residues 39-60 (DASSFIPTFFASVAVMAFGFFF) constitute a propeptide, removed in mature form.

The protein belongs to the AG-peptide AGP family. In terms of processing, contains 4-hydroxyproline; hydroxylated on Pro-32, Pro-34 and Pro-36. Post-translationally, O-glycosylated on hydroxyprolines; noncontiguous hydroxylproline residues are glycosylated with arabinogalactan.

It localises to the cell membrane. Proteoglycan that seems to be implicated in diverse developmental roles such as differentiation, cell-cell recognition, embryogenesis and programmed cell death. Involved in the regulation of root hair elongation. In Arabidopsis thaliana (Mouse-ear cress), this protein is Arabinogalactan protein 14.